The sequence spans 481 residues: Trigger factor (481 aa).

The 88-residue stretch at Gly174–Pro261 folds into the PPIase FKBP-type domain. The disordered stretch occupies residues Val435 to Lys481. The segment covering Thr456–Thr474 has biased composition (low complexity).

It belongs to the FKBP-type PPIase family. Tig subfamily.

It is found in the cytoplasm. It catalyses the reaction [protein]-peptidylproline (omega=180) = [protein]-peptidylproline (omega=0). In terms of biological role, involved in protein export. Acts as a chaperone by maintaining the newly synthesized protein in an open conformation. Functions as a peptidyl-prolyl cis-trans isomerase. This chain is Trigger factor, found in Prochlorococcus marinus (strain MIT 9312).